A 337-amino-acid polypeptide reads, in one-letter code: MAFLSQLNLQEILQTLSVLQWMPVYVFLGAIPIIVIPYFLVFTKFWMVSVLALAWLAYDWNTHSQGGRRSAWVRNWTIWKYFQNYFPIKLVKTHDLSPRHNYIIASHPHGVLPYGTFINFATETTGFARIFPGITPYVATLEGIFWIPIVREYVMSMGVCPVSELALKYLLTQKGSGNAVVIMVGGGAEALLCHPGATTVLLKQRKGFVKVALETGAYLVPSYSFGQNEVHNQETFPEGTWKRFFQKALQDTLKKLLRLSVCTFHGRGLTRGSWGFLPFNHPITTVVGEPLPIPRIKKPNEETVDKYHALYINALQKLFDEHKVQYGLSETQELTII.

Transmembrane regions (helical) follow at residues 22–42 (MPVY…FLVF) and 102–122 (YIIA…NFAT).

The protein belongs to the diacylglycerol acyltransferase family.

It is found in the endoplasmic reticulum membrane. It carries out the reaction 1,2-di-(9Z-octadecenoyl)-sn-glycerol + (9Z)-octadecenoyl-CoA = 1,2,3-tri-(9Z-octadecenoyl)-glycerol + CoA. Functionally, diglyceride acyltransferase that uses fatty acyl-CoA as substrate. Particularly active with oleate as a substrate. Has no wax synthase activity to produce wax esters. The protein is Diacylglycerol O-acyltransferase 2-like protein 6 (DGAT2L6) of Bos taurus (Bovine).